The primary structure comprises 665 residues: MYRRSYVFQTRKEQYEHADEASRAAEPERPADEGWAGATSLAALQGLGERVAAHVQRARALEQRHAGLRRQLDAFQRLGELAGPEDALARQVESNRQRVRDLEAERARLERQGTEAQRALDEFRSKYENECECQLLLKEMLERLNKEADEALLHNLRLQLEAQFLQDDISAAKDRHKKNLLEVQTYISILQQIIHTTPPASIVTSGMREEKLLTEREVAALRSQLEEGREVLSHLQAQRVELQAQTTTLEQAIKSAHECYDDEIQLYNEQIETLRKEIEETERVLEKSSYDCRQLAVAQQTLKNELDRYHRIIEIEGNRLTSAFIETPIPLFTQSHGVSLSTGSGGKDLTRALQDITAAKPRQKALPKNVPRRKEIITKDKTNGALEDAPLKGLEDTKLVQVVLKEESESKFESESKEVSPLTQEGAPEDVPDGGQISKGFGKLYRKVKEKVRSPKEPETPTELYTKERHVLVTGDANYVDPRFYVSSITAKGGVAVSVAEDSVLYDGQVEPSPESPKPPLENGQVGLQEKEDGQPIDQQPIDKEIEPDGAELEGPEEKREGEERDEESRRPCAMVTPGAEEPSIPEPPKPAADQDGAEVLGTRSRSLPEKGPPKALAYKTVEVVESIEKISTESIQTYEETAVIVETMIGKTKSDKKKSGEKSS.

The interval 1-40 is head; that stretch reads MYRRSYVFQTRKEQYEHADEASRAAEPERPADEGWAGATS. Residue Ser5 is modified to Phosphoserine. An IF rod domain is found at 40–320; it reads SLAALQGLGE…RIIEIEGNRL (281 aa). Positions 41–75 are coil 1A; sequence LAALQGLGERVAAHVQRARALEQRHAGLRRQLDAF. An N-acetylalanine modification is found at Ala42. The segment at 76–84 is linker 1; that stretch reads QRLGELAGP. Positions 85-184 are coil 1B; it reads EDALARQVES…RHKKNLLEVQ (100 aa). A linker 12 region spans residues 185–201; sequence TYISILQQIIHTTPPAS. Residues 202–320 are coil 2; the sequence is IVTSGMREEK…RIIEIEGNRL (119 aa). The tail stretch occupies residues 321-665; that stretch reads TSAFIETPIP…DKKKSGEKSS (345 aa). Ser341 and Ser420 each carry phosphoserine. 2 disordered regions span residues 410–439 and 506–614; these read SKFE…QISK and YDGQ…KGPP. The N-myristoyl glycine moiety is linked to residue Gly434. Ser513 bears the Phosphoserine mark. Residues 556–571 show a composition bias toward basic and acidic residues; it reads PEEKREGEERDEESRR. Residue Ser665 is modified to Phosphoserine.

Belongs to the intermediate filament family. As to quaternary structure, part of a complex required for lens intermediate filament formation composed of BFSP1, BFSP2 and CRYAA. Identified in a complex that contains VIM, EZR, AHNAK, BFSP1, BFSP2, ANK2, PLEC, PRX and spectrin. Found in a complex composed of PPL (via C-terminal linker domain), BFSP1 and BFSP2 in the retinal lens. Within the complex interacts with BFSP2. Interacts (via C-terminus) with MIP (via C-terminus) in aged lens fiber cells. In terms of processing, proteolytically cleaved during lens cell fiber differentiation with increased fragmentation as fiber cell age increases. Myristoylated at Gly-434 following proteolytic cleavage at Asp-433. Post-translationally, acetylated at Ala-42 following proteolytic cleavage at Leu-41. Expressed in the cortex and nucleus of the retina lens (at protein level).

Its subcellular location is the cell membrane. It is found in the cytoplasm. It localises to the cytoskeleton. The protein resides in the cell cortex. Its function is as follows. Required for the correct formation of lens intermediate filaments as part of a complex composed of BFSP1, BFSP2 and CRYAA. Involved in altering the calcium regulation of MIP water permeability. This chain is Filensin (BFSP1), found in Homo sapiens (Human).